We begin with the raw amino-acid sequence, 608 residues long: Rap1 GTPase-GDP dissociation stimulator 1 (608 aa).

ARM repeat units lie at residues 89–131 and 171–212; these read GLIS…DQAG and DSLQ…NLAE. Residues 122–171 form a prevents binding to prenylated RHOA region; the sequence is EGRSAVDQAGGAQIVVDHLRSLCSKTDPASEKLLTVFCGMLMNYSNEKND. An N6-acetyllysine modification is found at Lys231. ARM repeat units follow at residues 348-391, 392-432, and 480-520; these read DGNC…NLAI, PVVN…MLID, and SKDV…LIAA.

As to quaternary structure, interacts with RABL3. Interacts with RHOT1. Interacts with unprenylated RHOA; the interaction is direct. Interacts with RAP1A. Interacts with KRAS. Interacts with RAC1. Interacts with RAP1B. Preferentially interacts with unprenylated GTPases that will become geranylgeranylated. May also interact with prenylated GTPases. In terms of assembly, interacts with prenylated RHOA; the interaction is direct and in a 1:1 stoichiometry. Interacts with RAP1A. Interacts with KRAS. Interacts with RAC1. Interacts with RAP1B. Preferentially interacts with prenylated GTPases. In terms of processing, the N-terminus is blocked. Post-translationally, forms covalent cross-links mediated by transglutaminase TGM2, between a glutamine and the epsilon-amino group of a lysine residue, forming homopolymers and heteropolymers. In terms of tissue distribution, brain.

It localises to the cytoplasm. Its subcellular location is the cytosol. It is found in the endoplasmic reticulum. The protein resides in the mitochondrion. The protein localises to the nucleus. In terms of biological role, acts as a GEF (guanine nucleotide exchange factor) for the Rho family of small GTP-binding proteins (G proteins) that stimulates the dissociation of GDP to enable subsequent binding of GTP. Additionally, appears to chaperone the processing and/or trafficking of small GTPases containing a C-terminal polybasic region independently of GEF activity. Targets include RAP1A/RAP1B, RHOA, RHOB, RHOC, RAC1 and KRAS. Regulates mitochondrial dynamics by controlling RHOT function to promote mitochondrial fission during high calcium conditions. Able to promote the Ca(2+) release from the endoplasmic reticulum via both inositol trisphosphate (Ins3P) and ryanodine sensitive receptors leading to a enhanced mitochondrial Ca(2+) uptake. Functionally, acts as a GEF (guanine nucleotide exchange factor) for unprenylated RHOA. Chaperones the entry and passage of small GTPases through the prenylation pathway. Recognizes the last amino acid in the GTPase C-terminal CAAX motif with a preference for 'Leu' over 'Met', indicating involvement in the geranylgeranylation pathway. May also recognize prenylated GTPases. Acts as a GEF (guanine nucleotide exchange factor) for prenylated RHOA. Acts as a GEF for RHOC. Chaperones the downstream trafficking and/or processing of small newly prenylated GTPases. Escorts RAC1 to the nucleus. This chain is Rap1 GTPase-GDP dissociation stimulator 1 (RAP1GDS1), found in Bos taurus (Bovine).